Here is a 455-residue protein sequence, read N- to C-terminus: Folate transporter 2 (455 aa).

Transmembrane regions (helical) follow at residues 42-64 (IVVY…IYYL), 84-103 (YIPF…FSIF), 110-131 (YLFL…LNLS), 137-157 (LILF…EALV), 177-195 (IASK…GYFL), 201-221 (EYIF…CLFL), 242-261 (FINT…YMSG), and 281-301 (SFMG…IIIY). Asn-307 carries N-linked (GlcNAc...) asparagine glycosylation. 2 consecutive transmembrane segments (helical) span residues 313 to 331 (TLII…PIIL) and 347 to 367 (VLSG…PLFI). Residue Asn-416 is glycosylated (N-linked (GlcNAc...) asparagine). A helical transmembrane segment spans residues 417 to 438 (LSLYILTCGFFLLFSLTLVPLL).

The protein belongs to the major facilitator superfamily. Folate-biopterin transporter (TC 2.A.71) family.

It is found in the cell membrane. It carries out the reaction folate(in) + H(+)(in) = folate(out) + H(+)(out). The enzyme catalyses (6S)-5-methyl-5,6,7,8-tetrahydrofolate(in) + H(+)(in) = (6S)-5-methyl-5,6,7,8-tetrahydrofolate(out) + H(+)(out). Its activity is regulated as follows. Transport of folates is inhibited by probenecid and methotrexate. In terms of biological role, folate transporter with broad substrate specificity. Transports folic acid, folinic acid, pteroic acid, dihydropteroic acid, the folate precursor p-amino benzoic acid (pABA) and the human folate catabolite pABA monoglutamate. Can transport 5-methyltetrahydrofolate with low efficiency. The protein is Folate transporter 2 of Plasmodium falciparum (isolate 3D7).